Consider the following 345-residue polypeptide: Adenylosuccinate synthetase (345 aa).

Residues 18–24 (GDEGKGK) and 48–50 (GHT) contribute to the GTP site. Residue Asp19 is the Proton acceptor of the active site. 2 residues coordinate Mg(2+): Asp19 and Gly48. IMP-binding positions include 19–22 (DEGK), 46–49 (NAGH), Thr133, Arg147, Gln185, Thr200, and Arg262. His49 functions as the Proton donor in the catalytic mechanism. 258–264 (TVTGRRR) lines the substrate pocket. Residues Arg264, 290-292 (GLD), and 330-332 (STG) each bind GTP.

It belongs to the adenylosuccinate synthetase family. In terms of assembly, homodimer. The cofactor is Mg(2+).

Its subcellular location is the cytoplasm. It carries out the reaction IMP + L-aspartate + GTP = N(6)-(1,2-dicarboxyethyl)-AMP + GDP + phosphate + 2 H(+). It participates in purine metabolism; AMP biosynthesis via de novo pathway; AMP from IMP: step 1/2. Plays an important role in the de novo pathway of purine nucleotide biosynthesis. Catalyzes the first committed step in the biosynthesis of AMP from IMP. In Methanocaldococcus jannaschii (strain ATCC 43067 / DSM 2661 / JAL-1 / JCM 10045 / NBRC 100440) (Methanococcus jannaschii), this protein is Adenylosuccinate synthetase.